The following is a 1227-amino-acid chain: Protein transport protein Sec31A (1227 aa).

WD repeat units lie at residues 4-47 (KEID…EIFE), 64-111 (SSAH…AGDT), 120-160 (KHTG…TPMT), 166-206 (QPLE…PIIK), 209-254 (DHNN…SPLR), 258-298 (SHTR…VLYE), and 301-342 (TNMQ…DGLR). The WD 8; interaction with SEC13 repeat unit spans residues 397 to 430 (SFSFGGKLVTFENAKPQQQPGIDQQPQHHYVYVS). Disordered regions lie at residues 804 to 875 (EAIK…YSQA), 905 to 1008 (QPVA…GWND), and 1040 to 1075 (ADPQ…LGPY). The segment covering 905 to 924 (QPVAAPASASYPSPASNTNP) has biased composition (low complexity). The segment covering 925 to 945 (PYLPAAQPVPSPLYPGQPQPS) has biased composition (pro residues). Positions 995–1006 (PASQRTGPQNGW) are enriched in polar residues. Residues 1040–1049 (ADPQAQMQQP) show a composition bias toward low complexity. The segment covering 1057-1069 (PSFQPQQLSTGQQ) has biased composition (polar residues).

Belongs to the WD repeat SEC31 family. COPII is composed of at least 5 proteins: the SEC23/24 complex, the SEC13/31 complex and SAR1. SEC13 and SEC31 make a 2:2 tetramer that forms the edge element of the COPII outer coat. The tetramer self-assembles in multiple copies to form the complete polyhedral cage. Interacts (via WD 8) with SEC13.

It localises to the cytoplasm. Its subcellular location is the cytoplasmic vesicle. The protein localises to the COPII-coated vesicle membrane. The protein resides in the endoplasmic reticulum membrane. Its function is as follows. Component of the coat protein complex II (COPII) which promotes the formation of transport vesicles from the endoplasmic reticulum (ER). The coat has two main functions, the physical deformation of the endoplasmic reticulum membrane into vesicles and the selection of cargo molecules. This Gallus gallus (Chicken) protein is Protein transport protein Sec31A (SEC31A).